Reading from the N-terminus, the 398-residue chain is tRNA-specific 2-thiouridylase MnmA (398 aa).

ATP contacts are provided by residues 20-27 (AMSGGVDS) and Leu46. The active-site Nucleophile is the Cys114. The cysteines at positions 114 and 210 are disulfide-linked. Gly138 serves as a coordination point for ATP. An interaction with tRNA region spans residues 160-162 (RDQ). The Cysteine persulfide intermediate role is filled by Cys210.

This sequence belongs to the MnmA/TRMU family.

The protein localises to the cytoplasm. The enzyme catalyses S-sulfanyl-L-cysteinyl-[protein] + uridine(34) in tRNA + AH2 + ATP = 2-thiouridine(34) in tRNA + L-cysteinyl-[protein] + A + AMP + diphosphate + H(+). Functionally, catalyzes the 2-thiolation of uridine at the wobble position (U34) of tRNA, leading to the formation of s(2)U34. The chain is tRNA-specific 2-thiouridylase MnmA from Brucella canis (strain ATCC 23365 / NCTC 10854 / RM-666).